Reading from the N-terminus, the 895-residue chain is Putative endoplasmic reticulum metallopeptidase 1-B (895 aa).

Positions 1–27 (MSTGIRRRHADEKKNILEKESLQNDET) are disordered. Residues 1–39 (MSTGIRRRHADEKKNILEKESLQNDETQREMEKDISLLR) lie on the Cytoplasmic side of the membrane. Over residues 9–27 (HADEKKNILEKESLQNDET) the composition is skewed to basic and acidic residues. A helical membrane pass occupies residues 40 to 60 (PAHWNFIGLFFLVLIIGTTFL). Over 61–374 (HKCLPEPKDP…KPAEYADRKT (314 aa)) the chain is Lumenal. The N-linked (GlcNAc...) asparagine glycan is linked to asparagine 156. 2 residues coordinate Zn(2+): histidine 180 and aspartate 192. Glutamate 226 serves as the catalytic Proton acceptor. Residues glutamate 227, glutamate 253, and histidine 329 each coordinate Zn(2+). The helical transmembrane segment at 375–395 (VFFDFLGLFVIIYPLSIAHLV) threads the bilayer. At 396–424 (NMLTICTVIALMSHRFYSKTFITFLALRD) the chain is on the cytoplasmic side. A helical transmembrane segment spans residues 425–445 (YVLTILTIALVLKAMTFMSLF). The Lumenal portion of the chain corresponds to 446–457 (TYGALRWYTRHW). The chain crosses the membrane as a helical span at residues 458 to 478 (LALVAYGLPSVWAGISVQGLL). Residues 479–489 (TARLAPKAREE) lie on the Cytoplasmic side of the membrane. Residues 490–512 (YGSTLELIHLTLISGILLAFTYY) traverse the membrane as a helical segment. Residues 513 to 515 (DIA) are Lumenal-facing. The helical transmembrane segment at 516 to 538 (SGFLFALLLVPAIKSIITYFGAW) threads the bilayer. The Cytoplasmic segment spans residues 539-553 (PTCPTFNTILTLILS). Residues 554–574 (FPGCAMAIYTTEMLLSIFIPI) form a helical membrane-spanning segment. The Lumenal segment spans residues 575–584 (MGRSSYNPEP). A helical transmembrane segment spans residues 585 to 605 (AVSFFVAFSAGCIVLSLGGLV). Residues 606 to 619 (AKSRNSRSSNEAGL) lie on the Cytoplasmic side of the membrane. Residues 620-640 (LELIYNILGVLLVTLTILYVF) form a helical membrane-spanning segment. At 641 to 895 (SSFWPSPYRF…WNVDQVYKYF (255 aa)) the chain is on the lumenal side. 2 N-linked (GlcNAc...) asparagine glycosylation sites follow: asparagine 679 and asparagine 796.

It belongs to the peptidase M28 family. Requires Zn(2+) as cofactor.

The protein localises to the endoplasmic reticulum membrane. This chain is Putative endoplasmic reticulum metallopeptidase 1-B, found in Caenorhabditis elegans.